Consider the following 121-residue polypeptide: Somatostatin-1 (121 aa).

A signal peptide spans 1–24 (MKMVSSSRLRCLLVLLLSLTASIS). Residues 25 to 105 (CSFAGQRDSK…SGGPLLAPRE (81 aa)) constitute a propeptide that is removed on maturation. Residues 76–99 (NFPLAEGGPEDAHADLERAASGGP) are disordered. Residues Cys110 and Cys121 are joined by a disulfide bond.

This sequence belongs to the somatostatin family.

It localises to the secreted. In terms of biological role, somatostatin inhibits the release of somatotropin. The chain is Somatostatin-1 (sst1) from Lophius americanus (American angler).